Consider the following 199-residue polypeptide: Peroxiredoxin-1 (199 aa).

At Ser2 the chain carries N-acetylserine. In terms of domain architecture, Thioredoxin spans 6–165 (AKIGYPAPNF…ILRLVQAFQF (160 aa)). Position 7 is an N6-acetyllysine; alternate (Lys7). Lys7 is covalently cross-linked (Glycyl lysine isopeptide (Lys-Gly) (interchain with G-Cter in SUMO2); alternate). The residue at position 16 (Lys16) is an N6-acetyllysine. Phosphoserine is present on Ser32. Cys52 functions as the Cysteine sulfenic acid (-SOH) intermediate in the catalytic mechanism. Phosphothreonine is present on Thr90. A Glycyl lysine isopeptide (Lys-Gly) (interchain with G-Cter in SUMO2) cross-link involves residue Lys120. Lys136 carries the N6-acetyllysine modification. The interval 176–199 (GWKPGSDTIKPDVQKSKEYFSKQK) is disordered. The span at 184 to 199 (IKPDVQKSKEYFSKQK) shows a compositional bias: basic and acidic residues. A Glycyl lysine isopeptide (Lys-Gly) (interchain with G-Cter in SUMO1) cross-link involves residue Lys185. Lys197 is modified (N6-acetyllysine).

The protein belongs to the peroxiredoxin family. AhpC/Prx1 subfamily. As to quaternary structure, homodimer; disulfide-linked, upon oxidation. 5 homodimers assemble to form a ring-like decamer. Interacts with GDPD5; forms a mixed-disulfide with GDPD5. Interacts with SESN1 and SESN2. Interacts with FAM107A. In terms of processing, phosphorylated on Thr-90 during the M-phase, which leads to a decrease in enzymatic activity. Post-translationally, acetylation increases reducing activity and resistance to superoxidation. Deacetylated by HDAC6 which decreases reducing activity.

It localises to the cytoplasm. The enzyme catalyses a hydroperoxide + [thioredoxin]-dithiol = an alcohol + [thioredoxin]-disulfide + H2O. In terms of biological role, thiol-specific peroxidase that catalyzes the reduction of hydrogen peroxide and organic hydroperoxides to water and alcohols, respectively. Plays a role in cell protection against oxidative stress by detoxifying peroxides and as sensor of hydrogen peroxide-mediated signaling events. Might participate in the signaling cascades of growth factors and tumor necrosis factor-alpha by regulating the intracellular concentrations of H(2)O(2). Reduces an intramolecular disulfide bond in GDPD5 that gates the ability to GDPD5 to drive postmitotic motor neuron differentiation. This Cricetulus griseus (Chinese hamster) protein is Peroxiredoxin-1 (PRDX1).